Here is a 103-residue protein sequence, read N- to C-terminus: UPF0058 protein MJ1205 (103 aa).

This sequence belongs to the UPF0058 family.

The sequence is that of UPF0058 protein MJ1205 from Methanocaldococcus jannaschii (strain ATCC 43067 / DSM 2661 / JAL-1 / JCM 10045 / NBRC 100440) (Methanococcus jannaschii).